Reading from the N-terminus, the 37-residue chain is Large ribosomal subunit protein bL36 (37 aa).

Belongs to the bacterial ribosomal protein bL36 family.

In Bacillus pumilus (strain SAFR-032), this protein is Large ribosomal subunit protein bL36.